Here is a 1673-residue protein sequence, read N- to C-terminus: AF4/FMR2 family member lilli (1673 aa).

9 disordered regions span residues 1 to 24 (MAQQQQQQMQQQQQHHTSSINNNN), 54 to 80 (YSQNYNMEEYERRKRREREKIERQQGI), 125 to 302 (SRSA…PPEK), 407 to 534 (QLPP…GAQN), 575 to 604 (VGTGSGSGGTLSSGGSSSNKTPSPTESNKW), 722 to 1086 (RLSD…INTL), 1114 to 1133 (QGKLDAAAQPSAPQAPPAAP), 1141 to 1160 (RMTPTQQQQLGAGLASPART), and 1187 to 1315 (KLTP…MGKE). Over residues 71–80 (REKIERQQGI) the composition is skewed to basic and acidic residues. Low complexity-rich tracts occupy residues 146–180 (SLGHSPSSASSAAGPTAASATTSLPGQQQHYQQQQ) and 223–244 (PRTSSSNSNSSSVTNNASSGGV). Position 420 is a phosphothreonine (Thr420). The span at 428–441 (LKTEKNHSLEKQDS) shows a compositional bias: basic and acidic residues. The span at 443-454 (LENDLELSESED) shows a compositional bias: acidic residues. Phosphoserine occurs at positions 450 and 452. Positions 465–486 (GNSSNSSESDSSESGSESSSKN) are enriched in low complexity. A compositionally biased stretch (basic residues) spans 491–500 (HPNHQQHHHQ). The span at 501–525 (LQQQQQQQQATMQQQQVLQQQHRSQ) shows a compositional bias: low complexity. A compositionally biased stretch (gly residues) spans 577–586 (TGSGSGGTLS). The span at 594–604 (KTPSPTESNKW) shows a compositional bias: polar residues. The span at 724-757 (SDSGTSASGSSSSSSSSSDSAMGGEVVPMPGPGE) shows a compositional bias: low complexity. Over residues 775–788 (QPTQSQKAPPSNSV) the composition is skewed to polar residues. The segment covering 802 to 812 (QRQKKPRKKKA) has biased composition (basic residues). Phosphoserine is present on residues Ser821 and Ser822. Positions 851 to 863 (KKGRGRPRKQQQS) form a DNA-binding region, a.T hook. Over residues 860 to 898 (QQQSGGSGNLSSASAGSSSQTKGPTLTAAKKPLAKTPLA) the composition is skewed to low complexity. A phosphoserine mark is found at Ser871 and Ser873. Positions 909–919 (SQSSSNGNTPT) are enriched in polar residues. 2 stretches are compositionally biased toward low complexity: residues 949-965 (SSSAESSSKSSSSSSSS) and 993-1004 (GSGSSSPSSSGS). Positions 1011–1022 (TRSQVGSGQALA) are enriched in polar residues. Residues 1034–1060 (SQHSQHLSSSDCSSSSGGCTAVCSSSS) show a composition bias toward low complexity. A compositionally biased stretch (basic and acidic residues) spans 1065 to 1082 (EGRREKERERKPKSDKNK). The segment covering 1190 to 1205 (PAQQNGHLTPKDQATN) has biased composition (polar residues). 2 stretches are compositionally biased toward basic and acidic residues: residues 1226–1243 (EHPVKPEPELDAGYEAKF) and 1252–1282 (FQLKQERDRDRERERERERERERDREREQPP). A Phosphoserine modification is found at Ser1362. Thr1364 is modified (phosphothreonine). Residues 1564–1583 (NTPSSISPSNSVGSQGSGSN) show a composition bias toward low complexity. Residues 1564–1588 (NTPSSISPSNSVGSQGSGSNTPPGR) form a disordered region.

It belongs to the AF4 family. In terms of assembly, component of the super elongation complex (SEC), at least composed of Ell, Cdk9, cyclin-T (CycT), lilli and ear.

It is found in the nucleus. Its function is as follows. Has a role in transcriptional regulation. Acts in parallel with the Ras/MAPK and the PI3K/PKB pathways in the control of cell identity and cellular growth. Essential for regulation of the cytoskeleton and cell growth but not for cell proliferation or growth rate. Required specifically for the microtubule-based basal transport of lipid droplets. Plays a partially redundant function downstream of Raf in cell fate specification in the developing eye. Pair-rule protein that regulates embryonic cellularization, gastrulation and segmentation. The protein is AF4/FMR2 family member lilli of Drosophila melanogaster (Fruit fly).